The sequence spans 293 residues: uncharacterized protein (293 aa).

Disordered stretches follow at residues 1–114 and 268–293; these read MFLR…IPKL and EETA…GRML. A phosphoserine mark is found at Ser34, Ser35, and Ser89. 2 stretches are compositionally biased toward basic and acidic residues: residues 73–95 and 277–293; these read SSRD…RDKT and GQER…GRML.

This is an uncharacterized protein from Mus musculus (Mouse).